A 235-amino-acid chain; its full sequence is Carboxy-S-adenosyl-L-methionine synthase (235 aa).

S-adenosyl-L-methionine is bound by residues Tyr35, Gly60–Ser62, Asp83–Asn84, Asn124, and Arg191.

It belongs to the class I-like SAM-binding methyltransferase superfamily. Cx-SAM synthase family. In terms of assembly, homodimer.

It carries out the reaction prephenate + S-adenosyl-L-methionine = carboxy-S-adenosyl-L-methionine + 3-phenylpyruvate + H2O. Functionally, catalyzes the conversion of S-adenosyl-L-methionine (SAM) to carboxy-S-adenosyl-L-methionine (Cx-SAM). In Campylobacter jejuni subsp. jejuni serotype O:2 (strain ATCC 700819 / NCTC 11168), this protein is Carboxy-S-adenosyl-L-methionine synthase.